The primary structure comprises 230 residues: Response regulator MprA (230 aa).

Residues 4 to 118 enclose the Response regulatory domain; that stretch reads RILVVDDDRA…ELLARMRALL (115 aa). A 4-aspartylphosphate modification is found at Asp-48. The ompR/PhoB-type DNA-binding region spans 129 to 227; that stretch reads SMAMRFSDLT…VRGVGYVLRE (99 aa).

In terms of assembly, monomer. Interaction with each conserved 8-bp repeat requires tandem binding by two protein monomers. In terms of processing, phosphorylated and dephosphorylated by MprB.

Its subcellular location is the cytoplasm. Its function is as follows. Member of the two-component regulatory system MprB/MprA which contributes to maintaining a balance among several systems involved in stress resistance and is required for establishment and maintenance of persistent infection in the host. Functions as a transcriptional regulator that recognizes a 19-bp nucleotide motif comprizing two loosely conserved 8-bp direct DNA-binding motif repeats separated by a 3-bp spacer region. MprB/MprA up-regulates expression of mprA and pepD. The sequence is that of Response regulator MprA (mprA) from Mycobacterium bovis (strain ATCC BAA-935 / AF2122/97).